The primary structure comprises 198 residues: DnaJ homolog subfamily C member 12 (198 aa).

Met-1 is modified (N-acetylmethionine). In terms of domain architecture, J spans 14–79 (DYYTLLGCDE…ASRARYDHWR (66 aa)). Residues 112-167 (MLEESDQTPTDKIENEEQDEQKEIKKEEFGSTTEKMEQKESKSVEKSFSPQNPDSP) are disordered. Positions 120 to 156 (PTDKIENEEQDEQKEIKKEEFGSTTEKMEQKESKSVE) are enriched in basic and acidic residues. 3 positions are modified to phosphoserine: Ser-160, Ser-166, and Ser-182.

As to quaternary structure, interacts with HSPA8. Interacts with TPH1. Interacts with TPH2.

The protein resides in the cytoplasm. In terms of biological role, probable co-chaperone that participates in the proper folding of biopterin-dependent aromatic amino acid hydroxylases, which include phenylalanine-4-hydroxylase (PAH), tyrosine 3-monooxygenase (TH) and peripheral and neuronal tryptophan hydroxylases (TPH1 and TPH2). The polypeptide is DnaJ homolog subfamily C member 12 (DNAJC12) (Bos taurus (Bovine)).